An 88-amino-acid chain; its full sequence is Beta-insect excitatory toxin LqhIT1b (88 aa).

The N-terminal stretch at 1–18 is a signal peptide; it reads MKFFLLFLVVLPIMGVLG. The LCN-type CS-alpha/beta domain maps to 20–83; it reads KNGYAVDSKG…ISDTTKKYCD (64 aa). Disulfide bonds link Cys34/Cys55, Cys40/Cys60, Cys44/Cys62, and Cys56/Cys82.

The protein belongs to the long (4 C-C) scorpion toxin superfamily. Sodium channel inhibitor family. Beta subfamily. Expressed by the venom gland.

The protein localises to the secreted. Its function is as follows. Excitatory insect toxins induce a spastic paralysis. They bind voltage-independently at site-4 of sodium channels (Nav) and shift the voltage of activation toward more negative potentials thereby affecting sodium channel activation and promoting spontaneous and repetitive firing. The chain is Beta-insect excitatory toxin LqhIT1b from Leiurus hebraeus (Hebrew deathstalker scorpion).